We begin with the raw amino-acid sequence, 556 residues long: Formate--tetrahydrofolate ligase (556 aa).

Position 65 to 72 (65 to 72) interacts with ATP; that stretch reads TPAGEGKS.

This sequence belongs to the formate--tetrahydrofolate ligase family.

The enzyme catalyses (6S)-5,6,7,8-tetrahydrofolate + formate + ATP = (6R)-10-formyltetrahydrofolate + ADP + phosphate. The protein operates within one-carbon metabolism; tetrahydrofolate interconversion. The protein is Formate--tetrahydrofolate ligase of Streptococcus equi subsp. zooepidemicus (strain MGCS10565).